Consider the following 194-residue polypeptide: Small ribosomal subunit protein uS11m (194 aa).

The protein belongs to the universal ribosomal protein uS11 family. As to quaternary structure, component of the mitochondrial small ribosomal subunit (mt-SSU). Mature mammalian 55S mitochondrial ribosomes consist of a small (28S) and a large (39S) subunit. The 28S small subunit contains a 12S ribosomal RNA (12S mt-rRNA) and 30 different proteins. The 39S large subunit contains a 16S rRNA (16S mt-rRNA), a copy of mitochondrial valine transfer RNA (mt-tRNA(Val)), which plays an integral structural role, and 52 different proteins.

Its subcellular location is the mitochondrion. In Homo sapiens (Human), this protein is Small ribosomal subunit protein uS11m (MRPS11).